An 880-amino-acid polypeptide reads, in one-letter code: Lon protease (880 aa).

Residues 1 to 37 (MADYNDKNYLLHMSGPDSDTGPGIENEDPRAVENPGH) form a disordered region. The span at 27-37 (EDPRAVENPGH) shows a compositional bias: basic and acidic residues. Residues 57–251 (LPILPVRDVV…LVNTQLQREV (195 aa)) enclose the Lon N-terminal domain. 404-411 (GPPGVGKT) contributes to the ATP binding site. The Lon proteolytic domain maps to 640–821 (KLMPGMALGL…DELLPLVFEG (182 aa)). Residues Ser727 and Lys770 contribute to the active site. The span at 826 to 836 (GGVSGAGQAGD) shows a compositional bias: gly residues. Residues 826–880 (GGVSGAGQAGDKGGKSKAAAGKKDVVAARPAKPAAPARRRKDKTEDELPTAEAGA) form a disordered region. Over residues 852–861 (AARPAKPAAP) the composition is skewed to low complexity.

It belongs to the peptidase S16 family. As to quaternary structure, homohexamer. Organized in a ring with a central cavity.

Its subcellular location is the cytoplasm. The enzyme catalyses Hydrolysis of proteins in presence of ATP.. Functionally, ATP-dependent serine protease that mediates the selective degradation of mutant and abnormal proteins as well as certain short-lived regulatory proteins. Required for cellular homeostasis and for survival from DNA damage and developmental changes induced by stress. Degrades polypeptides processively to yield small peptide fragments that are 5 to 10 amino acids long. Binds to DNA in a double-stranded, site-specific manner. The polypeptide is Lon protease (Desulfovibrio desulfuricans (strain ATCC 27774 / DSM 6949 / MB)).